The primary structure comprises 65 residues: Conotoxin TsMRCL-05 (65 aa).

The first 22 residues, 1–22 (MHCLPVLVILLLLIASTPSVDA), serve as a signal peptide directing secretion. Positions 23-52 (RPNPKDDVPLASFHGAVNAKRYLRTLWNSR) are excised as a propeptide. Ile-64 is modified (isoleucine amide).

It belongs to the conotoxin T superfamily. Contains 2 disulfide bonds that can be either 'C1-C3, C2-C4' or 'C1-C4, C2-C3', since these disulfide connectivities have been observed for conotoxins with cysteine framework V (for examples, see AC P0DQQ7 and AC P81755). As to expression, expressed by the venom duct.

The protein resides in the secreted. The polypeptide is Conotoxin TsMRCL-05 (Conus tessulatus (Tessellate cone)).